A 393-amino-acid polypeptide reads, in one-letter code: Lipid-A-disaccharide synthase (393 aa).

The protein belongs to the LpxB family.

It catalyses the reaction a lipid X + a UDP-2-N,3-O-bis[(3R)-3-hydroxyacyl]-alpha-D-glucosamine = a lipid A disaccharide + UDP + H(+). It participates in bacterial outer membrane biogenesis; LPS lipid A biosynthesis. In terms of biological role, condensation of UDP-2,3-diacylglucosamine and 2,3-diacylglucosamine-1-phosphate to form lipid A disaccharide, a precursor of lipid A, a phosphorylated glycolipid that anchors the lipopolysaccharide to the outer membrane of the cell. This chain is Lipid-A-disaccharide synthase, found in Colwellia psychrerythraea (strain 34H / ATCC BAA-681) (Vibrio psychroerythus).